We begin with the raw amino-acid sequence, 365 residues long: DNA replication and repair protein RecF (365 aa).

An ATP-binding site is contributed by 30–37 (GRNAQGKT).

This sequence belongs to the RecF family.

It localises to the cytoplasm. In terms of biological role, the RecF protein is involved in DNA metabolism; it is required for DNA replication and normal SOS inducibility. RecF binds preferentially to single-stranded, linear DNA. It also seems to bind ATP. The protein is DNA replication and repair protein RecF of Streptococcus pneumoniae serotype 4 (strain ATCC BAA-334 / TIGR4).